The primary structure comprises 181 residues: Large ribosomal subunit protein uL5c (181 aa).

This sequence belongs to the universal ribosomal protein uL5 family. As to quaternary structure, part of the 50S ribosomal subunit; contacts the 5S rRNA.

The protein resides in the plastid. Functionally, binds 5S rRNA, forms part of the central protuberance of the 50S subunit. In Helicosporidium sp. subsp. Simulium jonesii (Green alga), this protein is Large ribosomal subunit protein uL5c (rpl5).